The chain runs to 360 residues: Peptide chain release factor 1 (360 aa).

Position 237 is an N5-methylglutamine (Q237).

It belongs to the prokaryotic/mitochondrial release factor family. Methylated by PrmC. Methylation increases the termination efficiency of RF1.

It is found in the cytoplasm. Functionally, peptide chain release factor 1 directs the termination of translation in response to the peptide chain termination codons UAG and UAA. The chain is Peptide chain release factor 1 from Cellvibrio japonicus (strain Ueda107) (Pseudomonas fluorescens subsp. cellulosa).